The chain runs to 208 residues: Putative 3-methyladenine DNA glycosylase (208 aa).

This sequence belongs to the DNA glycosylase MPG family.

This chain is Putative 3-methyladenine DNA glycosylase, found in Nitrobacter winogradskyi (strain ATCC 25391 / DSM 10237 / CIP 104748 / NCIMB 11846 / Nb-255).